The primary structure comprises 636 residues: Protein meg-1 (636 aa).

Polar residues-rich tracts occupy residues 1 to 13 (MDNR…NGNF), 38 to 54 (SSGN…NQQQ), and 292 to 355 (LSMN…QYNH). Disordered regions lie at residues 1–54 (MDNR…NQQQ), 289–367 (LFNL…APHL), 484–504 (SDVA…SMYI), and 521–542 (LDSS…KTPS). Ser574 bears the Phosphoserine; by mbk-2 mark. Residues 591–636 (MSQSFLHQQDDEAPDCTKNVHSESDLKQAEPQESDKQSDKELPSNE) form a disordered region. Basic and acidic residues predominate over residues 608–636 (KNVHSESDLKQAEPQESDKQSDKELPSNE).

As to quaternary structure, interacts with pptr-1, pptr-2 and pgl-1. Post-translationally, phosphorylated by mbk-2, which promotes the disassembly of zygotic P granules in the anterior cytoplasm of pre-gastrulation embryos. Dephosphorylated by a phosphatase complex containing the PP2A regulatory subunit pptr-1, which promotes the assembly and accumulation of zygotic P granules in the posterior cytoplasm of pre-gastrulation embryos. As to expression, not expressed in the adult germline or in any somatic tissues.

Its subcellular location is the cytoplasmic granule. Its function is as follows. P granule component, which acts redundantly with P granule component meg-2 to promote P granule segregation during embryogenesis, and germ cell proliferation and differentiation in larval stages. In its phosphorylated form, and together with meg-2, promotes the disassembly of zygotic P granules in the anterior cytoplasm of pre-gastrulation embryos. In its dephosphorylated form, and together with meg-2, promotes the assembly and accumulation of zygotic P granules in the posterior cytoplasm of pre-gastrulation embryos. May function with the nanos family members nos-2 and nos-3 to promote germ cell proliferation during larval development. Required for fertility. The protein is Protein meg-1 of Caenorhabditis elegans.